Here is a 178-residue protein sequence, read N- to C-terminus: MVARRKGERVVRKNEVENVQQRACANRRERQRTKELNDAFTLLRKLIPSMPSDKMSKIHTLRIATDYISFLDEMQKNGCKLYGHSIFDEKRGYNLQSAFNMWRGNNGYTPIAGPSQLPPLQSAHIPPPAPSSIPPHCLMPQPWYQTCPPPKQEFHELCPISTPNPNSNPNQLTPIHWQ.

Positions 20 to 71 (QQRACANRRERQRTKELNDAFTLLRKLIPSMPSDKMSKIHTLRIATDYISFL) constitute a bHLH domain.

Efficient DNA binding requires dimerization with another bHLH protein. Homodimer. Forms a heterodimer with hlh-2. Expressed in defecation-associated muscles and neuron-like cells in the head at the L1 stage. In later larvae, expressed in SM cells and their descendants. Not expressed in differentiated body wall or sex muscles.

It is found in the nucleus. Acts as a transcriptional regulator. Involved in postembryonic mesodermal cell fate specification. Activates ceh-24 and egl-15 during mesodermal patterning. This Caenorhabditis elegans protein is Twist-related protein (hlh-8).